The chain runs to 117 residues: Fluoride-specific ion channel FluC 2 (117 aa).

The next 4 helical transmembrane spans lie at 1–21 (MISI…RSAI), 33–53 (LPIA…LTIG), 60–80 (WFPA…STLA), and 95–115 (LFLN…YIGY). The Na(+) site is built by G71 and T74.

It belongs to the fluoride channel Fluc/FEX (TC 1.A.43) family.

The protein localises to the cell membrane. The enzyme catalyses fluoride(in) = fluoride(out). Its activity is regulated as follows. Na(+) is not transported, but it plays an essential structural role and its presence is essential for fluoride channel function. Fluoride-specific ion channel. Important for reducing fluoride concentration in the cell, thus reducing its toxicity. The polypeptide is Fluoride-specific ion channel FluC 2 (Staphylococcus aureus (strain COL)).